A 364-amino-acid polypeptide reads, in one-letter code: Methylthioribose-1-phosphate isomerase (364 aa).

Catalysis depends on Asp-254, which acts as the Proton donor.

Belongs to the eIF-2B alpha/beta/delta subunits family. MtnA subfamily.

It localises to the cytoplasm. It is found in the nucleus. It catalyses the reaction 5-(methylsulfanyl)-alpha-D-ribose 1-phosphate = 5-(methylsulfanyl)-D-ribulose 1-phosphate. It functions in the pathway amino-acid biosynthesis; L-methionine biosynthesis via salvage pathway; L-methionine from S-methyl-5-thio-alpha-D-ribose 1-phosphate: step 1/6. Catalyzes the interconversion of methylthioribose-1-phosphate (MTR-1-P) into methylthioribulose-1-phosphate (MTRu-1-P). The polypeptide is Methylthioribose-1-phosphate isomerase (Drosophila simulans (Fruit fly)).